Consider the following 258-residue polypeptide: Trifolitoxin-processing protein TfxF (258 aa).

Its function is as follows. The actions of the proteins TfxB, TfxD and TfxF are implicated in the processing of the inactive trifolitoxin (TfxA) precursor into the active peptide. The polypeptide is Trifolitoxin-processing protein TfxF (tfxF) (Rhizobium leguminosarum bv. trifolii).